Reading from the N-terminus, the 268-residue chain is Chymotrypsin-C (268 aa).

An N-terminal signal peptide occupies residues 1-16 (MLGITVLAAILACASC). Residues 17–29 (CGNPAFPPNLSTR) constitute a propeptide, activation peptide. 5 cysteine pairs are disulfide-bonded: C17–C141, C59–C75, C155–C222, C186–C202, and C212–C243. N-linked (GlcNAc...) asparagine glycosylation occurs at N25. In terms of domain architecture, Peptidase S1 spans 30 to 267 (VVGGEDAVPN…YNDWINEKIQ (238 aa)). Residue H74 is the Charge relay system of the active site. N-linked (GlcNAc...) asparagine glycosylation is present at N90. The Charge relay system role is filled by D121. Catalysis depends on S216, which acts as the Charge relay system.

Belongs to the peptidase S1 family. Elastase subfamily. As to expression, pancreas.

It carries out the reaction Preferential cleavage: Leu-|-Xaa, Tyr-|-Xaa, Phe-|-Xaa, Met-|-Xaa, Trp-|-Xaa, Gln-|-Xaa, Asn-|-Xaa.. In terms of biological role, regulates activation and degradation of trypsinogens and procarboxypeptidases by targeting specific cleavage sites within their zymogen precursors. Has chymotrypsin-type protease activity and hypocalcemic activity. Cleaves TRY4 and TRY5 and thereby inhibits their autoactivation. The protein is Chymotrypsin-C (Ctrc) of Rattus norvegicus (Rat).